The chain runs to 174 residues: NADH-quinone oxidoreductase subunit I (174 aa).

4Fe-4S ferredoxin-type domains follow at residues 44–74 (LNRYPDGLEKCIGCELCAWACPADAIYVEGD) and 90–119 (RVYQINYLRCIGCGLCIEACPTRALTMTND). Residues C54, C57, C60, C64, C99, C102, C105, and C109 each contribute to the [4Fe-4S] cluster site.

It belongs to the complex I 23 kDa subunit family. In terms of assembly, NDH-1 is composed of 14 different subunits. Subunits NuoA, H, J, K, L, M, N constitute the membrane sector of the complex. [4Fe-4S] cluster serves as cofactor.

The protein resides in the cell membrane. It carries out the reaction a quinone + NADH + 5 H(+)(in) = a quinol + NAD(+) + 4 H(+)(out). Its function is as follows. NDH-1 shuttles electrons from NADH, via FMN and iron-sulfur (Fe-S) centers, to quinones in the respiratory chain. The immediate electron acceptor for the enzyme in this species is believed to be menaquinone. Couples the redox reaction to proton translocation (for every two electrons transferred, four hydrogen ions are translocated across the cytoplasmic membrane), and thus conserves the redox energy in a proton gradient. In Mycobacterium sp. (strain KMS), this protein is NADH-quinone oxidoreductase subunit I.